Consider the following 425-residue polypeptide: Dual-specificity RNA methyltransferase RlmN (425 aa).

The active-site Proton acceptor is E136. Positions 142–381 constitute a Radical SAM core domain; the sequence is GDDRGTLCVS…FTAGYASPVR (240 aa). A disulfide bond links C149 and C392. [4Fe-4S] cluster is bound by residues C156, C160, and C163. Residues 218 to 219, S250, 272 to 274, and N349 contribute to the S-adenosyl-L-methionine site; these read GE and SLH. Catalysis depends on C392, which acts as the S-methylcysteine intermediate.

It belongs to the radical SAM superfamily. RlmN family. Requires [4Fe-4S] cluster as cofactor.

It is found in the cytoplasm. It carries out the reaction adenosine(2503) in 23S rRNA + 2 reduced [2Fe-2S]-[ferredoxin] + 2 S-adenosyl-L-methionine = 2-methyladenosine(2503) in 23S rRNA + 5'-deoxyadenosine + L-methionine + 2 oxidized [2Fe-2S]-[ferredoxin] + S-adenosyl-L-homocysteine. The enzyme catalyses adenosine(37) in tRNA + 2 reduced [2Fe-2S]-[ferredoxin] + 2 S-adenosyl-L-methionine = 2-methyladenosine(37) in tRNA + 5'-deoxyadenosine + L-methionine + 2 oxidized [2Fe-2S]-[ferredoxin] + S-adenosyl-L-homocysteine. Specifically methylates position 2 of adenine 2503 in 23S rRNA and position 2 of adenine 37 in tRNAs. m2A2503 modification seems to play a crucial role in the proofreading step occurring at the peptidyl transferase center and thus would serve to optimize ribosomal fidelity. This Methylorubrum extorquens (strain PA1) (Methylobacterium extorquens) protein is Dual-specificity RNA methyltransferase RlmN.